The primary structure comprises 983 residues: Probable beta-galactosidase C (983 aa).

The N-terminal stretch at methionine 1–glycine 23 is a signal peptide. Substrate-binding residues include tyrosine 82, asparagine 127, alanine 128, glutamate 129, and asparagine 187. Residue glutamate 188 is the Proton donor of the active site. An N-linked (GlcNAc...) asparagine glycan is attached at asparagine 197. Tyrosine 251 is a binding site for substrate. Cysteines 257 and 304 form a disulfide. The N-linked (GlcNAc...) asparagine glycan is linked to asparagine 276. Residue glutamate 287 is the Nucleophile of the active site. Tyrosine 353 is a substrate binding site. N-linked (GlcNAc...) asparagine glycosylation is found at asparagine 391, asparagine 434, asparagine 466, asparagine 516, asparagine 601, asparagine 676, asparagine 714, asparagine 719, asparagine 758, and asparagine 804.

Belongs to the glycosyl hydrolase 35 family.

Its subcellular location is the secreted. The catalysed reaction is Hydrolysis of terminal non-reducing beta-D-galactose residues in beta-D-galactosides.. Functionally, cleaves beta-linked terminal galactosyl residues from gangliosides, glycoproteins, and glycosaminoglycans. The polypeptide is Probable beta-galactosidase C (lacC) (Aspergillus fumigatus (strain CBS 144.89 / FGSC A1163 / CEA10) (Neosartorya fumigata)).